The chain runs to 280 residues: uncharacterized protein (280 aa).

Tyr54 acts as the Proton donor in catalysis. His116 contacts substrate. 194–246 (SPLMQGQLLDHPVLADIAQTYNKSVAQIILRWDLQHGIITIPKSTKEHRIKEN) serves as a coordination point for NADP(+).

The protein belongs to the aldo/keto reductase family.

This is an uncharacterized protein from Bacillus subtilis (strain 168).